A 142-amino-acid chain; its full sequence is Protein OrfX1 (142 aa).

This sequence belongs to the TULIP P47 family. In terms of assembly, orfX1 was not detected as part of a crude toxin extract that includes BoNTA2/NTNH, P47, OrfX2 and OrfX3.

Its function is as follows. Part of a botulinum neurotoxin type A2 (BoNT) locus; may be part of a progenitor toxin complex required to protect BoNT during its passage through the host gastrointestinal tract. Binds phosphatidylinositol (3,4) bisphosphate, phosphatidylethanolamine and phosphatidylserine. The protein is Protein OrfX1 (orfX1) of Clostridium botulinum (strain Kyoto / Type A2).